The chain runs to 521 residues: Ribonuclease Y (521 aa).

The chain crosses the membrane as a helical span at residues 3-23 (VSIWMLVITVLAAVAAYFAGS). Positions 211–271 (TVSVVPLPSD…VRREVARMSL (61 aa)) constitute a KH domain. Residues 337–430 (IYQHSLEVAF…VQAADALSGA (94 aa)) form the HD domain.

Belongs to the RNase Y family.

The protein localises to the cell membrane. In terms of biological role, endoribonuclease that initiates mRNA decay. The sequence is that of Ribonuclease Y from Pelobacter propionicus (strain DSM 2379 / NBRC 103807 / OttBd1).